Here is a 155-residue protein sequence, read N- to C-terminus: uncharacterized protein (155 aa).

In terms of domain architecture, Macro spans 1–155 (MIVKYIKGDI…IVIVDWEPLL (155 aa)).

This is an uncharacterized protein from Escherichia coli (Bacteriophage T4).